The chain runs to 204 residues: Urease accessory protein UreG (204 aa).

15–22 is a binding site for GTP; the sequence is GPVGSGKT.

It belongs to the SIMIBI class G3E GTPase family. UreG subfamily. Homodimer. UreD, UreF and UreG form a complex that acts as a GTP-hydrolysis-dependent molecular chaperone, activating the urease apoprotein by helping to assemble the nickel containing metallocenter of UreC. The UreE protein probably delivers the nickel.

The protein resides in the cytoplasm. Facilitates the functional incorporation of the urease nickel metallocenter. This process requires GTP hydrolysis, probably effectuated by UreG. The protein is Urease accessory protein UreG of Methylobacterium sp. (strain 4-46).